We begin with the raw amino-acid sequence, 291 residues long: 33 kDa chaperonin (291 aa).

Intrachain disulfides connect Cys237–Cys239 and Cys270–Cys273.

The protein belongs to the HSP33 family. Post-translationally, under oxidizing conditions two disulfide bonds are formed involving the reactive cysteines. Under reducing conditions zinc is bound to the reactive cysteines and the protein is inactive.

It localises to the cytoplasm. Redox regulated molecular chaperone. Protects both thermally unfolding and oxidatively damaged proteins from irreversible aggregation. Plays an important role in the bacterial defense system toward oxidative stress. The protein is 33 kDa chaperonin of Bacillus cereus (strain B4264).